The chain runs to 37 residues: Cytochrome b6-f complex subunit 7 (37 aa).

The helical transmembrane segment at 11-29 (AILSIVLVLVGLAWGFLLL) threads the bilayer.

This sequence belongs to the PetM family. In terms of assembly, the 4 large subunits of the cytochrome b6-f complex are cytochrome b6, subunit IV (17 kDa polypeptide, PetD), cytochrome f and the Rieske protein, while the 4 small subunits are PetG, PetL, PetM and PetN. The complex functions as a dimer.

The protein localises to the cellular thylakoid membrane. Its function is as follows. Component of the cytochrome b6-f complex, which mediates electron transfer between photosystem II (PSII) and photosystem I (PSI), cyclic electron flow around PSI, and state transitions. The protein is Cytochrome b6-f complex subunit 7 of Gloeothece citriformis (strain PCC 7424) (Cyanothece sp. (strain PCC 7424)).